The following is a 60-amino-acid chain: MAVPARHTSKAKKNKRRTHYKLTAPSVKFDETTGDYSRSHRVSLKGYYKGHKIAKANAAE.

The disordered stretch occupies residues 1–23; the sequence is MAVPARHTSKAKKNKRRTHYKLT. Over residues 7-20 the composition is skewed to basic residues; that stretch reads HTSKAKKNKRRTHY.

It belongs to the bacterial ribosomal protein bL32 family.

This is Large ribosomal subunit protein bL32 from Streptococcus equi subsp. equi (strain 4047).